Here is a 275-residue protein sequence, read N- to C-terminus: Putative phosphoenolpyruvate synthase regulatory protein (275 aa).

Residue 153–160 coordinates ADP; sequence GVSRTGKT.

Belongs to the pyruvate, phosphate/water dikinase regulatory protein family. PSRP subfamily.

The enzyme catalyses [pyruvate, water dikinase] + ADP = [pyruvate, water dikinase]-phosphate + AMP + H(+). It catalyses the reaction [pyruvate, water dikinase]-phosphate + phosphate + H(+) = [pyruvate, water dikinase] + diphosphate. Its function is as follows. Bifunctional serine/threonine kinase and phosphorylase involved in the regulation of the phosphoenolpyruvate synthase (PEPS) by catalyzing its phosphorylation/dephosphorylation. The sequence is that of Putative phosphoenolpyruvate synthase regulatory protein from Nitrosomonas europaea (strain ATCC 19718 / CIP 103999 / KCTC 2705 / NBRC 14298).